A 401-amino-acid polypeptide reads, in one-letter code: Leucine aminopeptidase 1 (401 aa).

The first 18 residues, 1 to 18 (MKVAKASLLTILAHSVSA), serve as a signal peptide directing secretion. Positions 19–87 (RFLAEDEINR…GATRLRTKTK (69 aa)) are excised as a propeptide. Asparagine 179 carries an N-linked (GlcNAc...) asparagine glycan. Zn(2+) contacts are provided by histidine 187, aspartate 206, glutamate 245, and aspartate 272. Cysteine 321 and cysteine 325 are oxidised to a cystine. Residue histidine 354 coordinates Zn(2+).

The protein belongs to the peptidase M28 family. M28E subfamily. Monomer. Requires Zn(2+) as cofactor.

The protein localises to the secreted. In terms of biological role, extracellular aminopeptidase that allows assimilation of proteinaceous substrates. This is Leucine aminopeptidase 1 (LAP1) from Colletotrichum graminicola (strain M1.001 / M2 / FGSC 10212) (Maize anthracnose fungus).